A 369-amino-acid chain; its full sequence is CLIP domain-containing serine protease HP8 (369 aa).

Positions 1-24 (MKTPFEKIRIISCILVIVSTNVVG) are cleaved as a signal peptide. A propeptide spanning residues 25–81 (QKCNGGANCIPLEECTDLFQQLKQGNSPQLTRLLRGLHCGFEDLNSPKICCPPEFLA) is cleaved from the precursor. Residues 26–75 (KCNGGANCIPLEECTDLFQQLKQGNSPQLTRLLRGLHCGFEDLNSPKICC) enclose the Clip domain. Intrachain disulfides connect cysteine 27–cysteine 74, cysteine 33–cysteine 63, cysteine 39–cysteine 75, cysteine 105–cysteine 239, cysteine 142–cysteine 158, cysteine 186–cysteine 191, cysteine 286–cysteine 303, and cysteine 313–cysteine 344. Residues 113 to 368 (IFGGIQTEID…FMDWILSKLE (256 aa)) form the Peptidase S1 domain. Histidine 157 functions as the Charge relay system in the catalytic mechanism. The Ca(2+) site is built by glutamate 177, asparagine 179, threonine 182, and aspartate 185. N-linked (GlcNAc...) asparagine glycosylation occurs at asparagine 179. Residue aspartate 219 is the Charge relay system of the active site. Serine 317 functions as the Charge relay system in the catalytic mechanism.

This sequence belongs to the peptidase S1 family. CLIP subfamily. In the active form, heterodimer of a light chain and a heavy chain; disulfide-linked. Proteolytically cleaved for activation. Cleavage produces a light chain and a catalytic heavy chain which remains covalently associated probably through an interchain disulfide bond. As to expression, in larvae, expressed in the fat body and hemocytes.

It localises to the secreted. The protein localises to the cytoplasm. Inhibited by (p-amidinophenyl) methanesulfonyl fluoride, p-nitrophenyl-p'-guanidinobenzoate, D-phenylalanyl-L-prolyl-L-arginyl chloromethane, leupeptin, antipain and to a lesser extent by antithrombin III. Endopeptidase with selective post-Arg cleavage site. Functions in the innate immune response to fungal and Gram-positive bacterial infections. Upon pathogen infection promotes nodulation; a cellular defense response in which hemocytes surround and isolate invading pathogens forming aggregates called nodules. Involved in activating nodule formation in response to infection with M.luteus, E.coli or S.cerevisiae. Able to bind the microbes M.luteus, E.coli or S.cerevisiae. According to another report, does not bind microorganisms. This is CLIP domain-containing serine protease HP8 from Bombyx mori (Silk moth).